Reading from the N-terminus, the 557-residue chain is Alpha-barbatene synthase (557 aa).

Positions 273, 310, 314, 451, and 454 each coordinate (2E,6E)-farnesyl diphosphate. Mg(2+)-binding residues include Asp310 and Asp314. The DDXXD motif motif lies at Asp310–Asp314. Positions 454, 455, and 462 each coordinate Mg(2+).

The protein belongs to the terpene synthase family. Tpsa subfamily. Monomer. Mg(2+) serves as cofactor. Requires Mn(2+) as cofactor. As to expression, expressed exclusively in flowers. Expressed in intrafloral nectaries and in the funiculus within the ovules.

The protein resides in the cytoplasm. It carries out the reaction (2E,6E)-farnesyl diphosphate = (+)-alpha-barbatene + diphosphate. The catalysed reaction is (2E,6E)-farnesyl diphosphate = (+)-thujopsene + diphosphate. It catalyses the reaction (2E,6E)-farnesyl diphosphate = (+)-beta-chamigrene + diphosphate. The enzyme catalyses (2E,6E)-farnesyl diphosphate = (+)-beta-barbatene + diphosphate. It carries out the reaction (2E,6E)-farnesyl diphosphate = beta-sesquiphellandrene + diphosphate. The catalysed reaction is (2E,6E)-farnesyl diphosphate = (S)-beta-bisabolene + diphosphate. It catalyses the reaction (2E,6E)-farnesyl diphosphate = (-)-alpha-cuprenene + diphosphate. The enzyme catalyses (2E,6E)-farnesyl diphosphate = alpha-zingiberene + diphosphate. It carries out the reaction (2E,6E)-farnesyl diphosphate = beta-acoradiene + diphosphate. The catalysed reaction is (2E,6E)-farnesyl diphosphate = (E)-beta-farnesene + diphosphate. It functions in the pathway secondary metabolite biosynthesis; terpenoid biosynthesis. In terms of biological role, involved in the biosynthesis of over 15 sesquiterpenes (C15). The major products are (+)-alpha-barbatene (27.3%), (+)-thujopsene (17.8%) and (+)-beta-chamigrene (9.9%). Can use farnesyl diphosphate or geranyl diphosphate as substrates, but not geranylgeranyl diphosphate. In Arabidopsis thaliana (Mouse-ear cress), this protein is Alpha-barbatene synthase.